A 419-amino-acid polypeptide reads, in one-letter code: Tyrosine--tRNA ligase (419 aa).

Y42 contacts L-tyrosine. The 'HIGH' region motif lies at 47-56; that stretch reads CTAPSLHVGS. Residues Y179 and Q183 each contribute to the L-tyrosine site. A 'KMSKS' region motif is present at residues 239-243; sequence KMGKT. An ATP-binding site is contributed by K242. The S4 RNA-binding domain occupies 353–419; that stretch reads LGVLAAFVKA…RKRHVLLKLV (67 aa).

It belongs to the class-I aminoacyl-tRNA synthetase family. TyrS type 1 subfamily. In terms of assembly, homodimer.

The protein resides in the cytoplasm. It catalyses the reaction tRNA(Tyr) + L-tyrosine + ATP = L-tyrosyl-tRNA(Tyr) + AMP + diphosphate + H(+). Its function is as follows. Catalyzes the attachment of tyrosine to tRNA(Tyr) in a two-step reaction: tyrosine is first activated by ATP to form Tyr-AMP and then transferred to the acceptor end of tRNA(Tyr). This Methylocella silvestris (strain DSM 15510 / CIP 108128 / LMG 27833 / NCIMB 13906 / BL2) protein is Tyrosine--tRNA ligase.